We begin with the raw amino-acid sequence, 456 residues long: Transforming growth factor beta-1-induced transcript 1 protein (456 aa).

At Met-1 the chain carries N-acetylmethionine. The tract at residues 1–79 (MEDLDALLSD…ATPPFSSSCG (79 aa)) is disordered. A transcription activation region spans residues 1–195 (MEDLDALLSD…DTPSPPGPTS (195 aa)). The interval 1 to 235 (MEDLDALLSD…CNKPIAGQVV (235 aa)) is interaction with PTK2B/PYK2. Positions 3 to 15 (DLDALLSDLETTT) match the LD motif 1 motif. Phosphothreonine is present on Thr-33. Tyr-55 bears the Phosphotyrosine mark. Phosphoserine is present on Ser-63. The interaction with PTK2/FAK1 stretch occupies residues 78-131 (CGVLGTGLCELDRLLQELNATQFNITDEIMSQFPSSKETAGEQKEDQSEDKKRP). Residues 87–99 (ELDRLLQELNATQ) carry the LD motif 2 motif. The segment at 109–146 (QFPSSKETAGEQKEDQSEDKKRPSPPPSPSPVLPKPSA) is disordered. The span at 116 to 130 (TAGEQKEDQSEDKKR) shows a compositional bias: basic and acidic residues. Ser-132, Ser-136, Ser-138, Ser-159, Ser-181, and Ser-189 each carry phosphoserine. Pro residues predominate over residues 132 to 142 (SPPPSPSPVLP). Positions 152-163 (ELDRLMASLSDF) match the LD motif 3 motif. The disordered stretch occupies residues 166–200 (QNHLPASGPTPPPVPSSMSEDTPSPPGPTSKGSLD). Positions 198 to 210 (SLDTMLGLLQSDL) match the LD motif 4 motif. LIM zinc-binding domains lie at 221 to 280 (GLCG…RFSP), 281 to 338 (RCGL…QLFA), 339 to 398 (PRCQ…RRGS), and 399 to 456 (LCAT…KLFG). At Ser-398 the chain carries Phosphoserine. Thr-402 bears the Phosphothreonine mark.

It belongs to the paxillin family. Homooligomer. Interacts with CRIP2, HSPB1, ILK, LIMS1, LIMS2, NCK2, NUDT16L1, PAK, PPARG, PTPN12, TCF3, TCF7L2 and VCL. Forms a complex with GIT1 and ARHGEF7. Interacts with AR/androgen receptor in a ligand-dependent manner. Interacts with CSK, LYN, MAPK15, NR3C1, PPARG, PTK2/FAK1, PTK2B/PYK2, SLC6A3, SLC6A4, SMAD3, SRC and talin. Interacts (via LIM zinc-binding domain 2) with CBLC (via RING-type zinc finger); the interaction is direct and enhances CBLC E3 ubiquitin-protein ligase activity. In terms of processing, phosphorylated by gonadotropin-releasing hormone-activated SRC.

The protein resides in the cell junction. The protein localises to the focal adhesion. It localises to the nucleus matrix. It is found in the cytoplasm. Its subcellular location is the cytoskeleton. Its function is as follows. Functions as a molecular adapter coordinating multiple protein-protein interactions at the focal adhesion complex and in the nucleus. Links various intracellular signaling modules to plasma membrane receptors and regulates the Wnt and TGFB signaling pathways. May also regulate SLC6A3 and SLC6A4 targeting to the plasma membrane hence regulating their activity. In the nucleus, functions as a nuclear receptor coactivator regulating glucocorticoid, androgen, mineralocorticoid and progesterone receptor transcriptional activity. May play a role in the processes of cell growth, proliferation, migration, differentiation and senescence. May have a zinc-dependent DNA-binding activity. This is Transforming growth factor beta-1-induced transcript 1 protein (TGFB1I1) from Bos taurus (Bovine).